The sequence spans 618 residues: Proline--tRNA ligase (618 aa).

Belongs to the class-II aminoacyl-tRNA synthetase family. ProS type 1 subfamily. As to quaternary structure, homodimer.

It localises to the cytoplasm. The catalysed reaction is tRNA(Pro) + L-proline + ATP = L-prolyl-tRNA(Pro) + AMP + diphosphate. Catalyzes the attachment of proline to tRNA(Pro) in a two-step reaction: proline is first activated by ATP to form Pro-AMP and then transferred to the acceptor end of tRNA(Pro). As ProRS can inadvertently accommodate and process non-cognate amino acids such as alanine and cysteine, to avoid such errors it has two additional distinct editing activities against alanine. One activity is designated as 'pretransfer' editing and involves the tRNA(Pro)-independent hydrolysis of activated Ala-AMP. The other activity is designated 'posttransfer' editing and involves deacylation of mischarged Ala-tRNA(Pro). The misacylated Cys-tRNA(Pro) is not edited by ProRS. This is Proline--tRNA ligase from Streptococcus pyogenes serotype M18 (strain MGAS8232).